The primary structure comprises 286 residues: 2,3,4,5-tetrahydropyridine-2,6-dicarboxylate N-succinyltransferase (286 aa).

Positions 111 and 148 each coordinate substrate.

The protein belongs to the transferase hexapeptide repeat family. In terms of assembly, homotrimer.

It is found in the cytoplasm. It carries out the reaction (S)-2,3,4,5-tetrahydrodipicolinate + succinyl-CoA + H2O = (S)-2-succinylamino-6-oxoheptanedioate + CoA. Its pathway is amino-acid biosynthesis; L-lysine biosynthesis via DAP pathway; LL-2,6-diaminopimelate from (S)-tetrahydrodipicolinate (succinylase route): step 1/3. The sequence is that of 2,3,4,5-tetrahydropyridine-2,6-dicarboxylate N-succinyltransferase from Rhizobium etli (strain ATCC 51251 / DSM 11541 / JCM 21823 / NBRC 15573 / CFN 42).